Reading from the N-terminus, the 309-residue chain is MVNRRDLIKWSAVALGAGAGLAGPAPAAHAADLEWEQYPVPAAPGGNRSWQLLPSHSDDFNYTGKPQTFRGRWLDQHKDGWSGPANSLYSARHSWVADGNLIVEGRRAPDGRVYCGYVTSRTPVEYPLYTEVLMRVSGLKLSSNFWLLSRDDVNEIDVIECYGNESLHGKHMNTAYHIFQRNPFTELARSQKGYFADGSYGYNGETGQVFGDGAGQPLLRNGFHRYGVHWISATEFDFYFNGRLVRRLNRSNDLRDPRSRFFDQPMHLILNTESHQWRVDRGIEPTDAELADPSINNIYYRWVRTYQAV.

Residues methionine 1–alanine 30 constitute a signal peptide (tat-type signal). Residues leucine 33–valine 309 enclose the GH16 domain. Glutamate 155 (nucleophile) is an active-site residue. Glutamate 160 acts as the Proton donor in catalysis.

It belongs to the glycosyl hydrolase 16 family. In terms of processing, predicted to be exported by the Tat system. The position of the signal peptide cleavage has been experimentally proven.

The protein localises to the secreted. It carries out the reaction Hydrolysis of (1-&gt;4)-beta-D-galactosidic linkages in agarose, giving the tetramer as the predominant product.. This chain is Extracellular agarase (dagA), found in Streptomyces coelicolor (strain ATCC BAA-471 / A3(2) / M145).